The sequence spans 380 residues: Erythronate-4-phosphate dehydrogenase (380 aa).

Residues Ser45 and Thr66 each coordinate substrate. NAD(+) contacts are provided by residues 126-127 (QV), Asp146, Thr174, 205-207 (ASR), and Asp231. The active site involves Arg207. Glu236 is a catalytic residue. Residue His253 is the Proton donor of the active site. Gly256 provides a ligand contact to NAD(+). Residue Tyr257 coordinates substrate.

The protein belongs to the D-isomer specific 2-hydroxyacid dehydrogenase family. PdxB subfamily. As to quaternary structure, homodimer.

The protein localises to the cytoplasm. It carries out the reaction 4-phospho-D-erythronate + NAD(+) = (R)-3-hydroxy-2-oxo-4-phosphooxybutanoate + NADH + H(+). Its pathway is cofactor biosynthesis; pyridoxine 5'-phosphate biosynthesis; pyridoxine 5'-phosphate from D-erythrose 4-phosphate: step 2/5. Its function is as follows. Catalyzes the oxidation of erythronate-4-phosphate to 3-hydroxy-2-oxo-4-phosphonooxybutanoate. In Pseudomonas savastanoi pv. phaseolicola (strain 1448A / Race 6) (Pseudomonas syringae pv. phaseolicola (strain 1448A / Race 6)), this protein is Erythronate-4-phosphate dehydrogenase.